Consider the following 247-residue polypeptide: tRNA pseudouridine synthase A 1 (247 aa).

D53 acts as the Nucleophile in catalysis. Residue Y111 coordinates substrate.

It belongs to the tRNA pseudouridine synthase TruA family. As to quaternary structure, homodimer.

It catalyses the reaction uridine(38/39/40) in tRNA = pseudouridine(38/39/40) in tRNA. Formation of pseudouridine at positions 38, 39 and 40 in the anticodon stem and loop of transfer RNAs. The chain is tRNA pseudouridine synthase A 1 from Bacillus cereus (strain ATCC 10987 / NRS 248).